A 414-amino-acid chain; its full sequence is Sensor protein CutS (414 aa).

Positions 1 to 15 are enriched in pro residues; the sequence is MATTPAPPGAPPKPT. The disordered stretch occupies residues 1-21; the sequence is MATTPAPPGAPPKPTWDPRSA. Helical transmembrane passes span 37 to 57 and 121 to 141; these read LLYG…IYLL and SLLA…AMAG. The HAMP domain occupies 142–194; the sequence is RVLSPLGRITRTARAVAGSDLSRRIELDGPDDELKELADTFDDMLERLQRAFT. In terms of domain architecture, Histidine kinase spans 202 to 414; that stretch reads NASHELRTPL…GLVMRVTLPV (213 aa). Phosphohistidine; by autocatalysis is present on histidine 205.

It is found in the cell membrane. It catalyses the reaction ATP + protein L-histidine = ADP + protein N-phospho-L-histidine.. Its function is as follows. Member of the two-component regulatory system CutS/CutR, involved in the regulation of copper metabolism. The chain is Sensor protein CutS (cutS) from Streptomyces coelicolor (strain ATCC BAA-471 / A3(2) / M145).